Here is a 234-residue protein sequence, read N- to C-terminus: Enterobactin synthase component D (234 aa).

Mg(2+) is bound by residues aspartate 107, glutamate 109, and glutamate 152.

Belongs to the P-Pant transferase superfamily. EntD family. As to quaternary structure, entB, EntD, EntE, and EntF form a multienzyme complex called enterobactin synthase. Mg(2+) serves as cofactor.

The protein resides in the membrane. It carries out the reaction apo-[aryl-carrier protein] + CoA = holo-[aryl-carrier protein] + adenosine 3',5'-bisphosphate + H(+). The catalysed reaction is apo-[peptidyl-carrier protein] + CoA = holo-[peptidyl-carrier protein] + adenosine 3',5'-bisphosphate + H(+). Its pathway is siderophore biosynthesis; enterobactin biosynthesis. In terms of biological role, involved in the biosynthesis of the siderophore enterobactin (enterochelin), which is a macrocyclic trimeric lactone of N-(2,3-dihydroxybenzoyl)-serine. The serine trilactone serves as a scaffolding for the three catechol functionalities that provide hexadentate coordination for the tightly ligated iron(2+) atoms. Plays an essential role in the assembly of the enterobactin by catalyzing the transfer of the 4'-phosphopantetheine (Ppant) moiety from coenzyme A to the apo-domains of both EntB (ArCP domain) and EntF (PCP domain) to yield their holo-forms which make them competent for the activation of 2,3-dihydroxybenzoate (DHB) and L-serine, respectively. The protein is Enterobactin synthase component D of Salmonella typhi.